We begin with the raw amino-acid sequence, 746 residues long: Protein Niban 2 (746 aa).

Gly2 carries N-myristoyl glycine lipidation. A PH domain is found at 68–192 (RIVFSGNLFQ…WQAVLQDCIR (125 aa)). Residues Ser568, Ser574, Ser601, and Ser603 each carry the phosphoserine modification. Residues 590 to 746 (GEEYSNSGGG…EDSAGVQTEF (157 aa)) form a disordered region. Thr606 carries the post-translational modification Phosphothreonine. 9 positions are modified to phosphoserine: Ser609, Ser624, Ser638, Ser641, Ser646, Ser665, Ser681, Ser692, and Ser696. Residues 671–693 (PLLNGAPAGESPQPKAAPEASSP) show a composition bias toward low complexity. The span at 720 to 746 (GEQVSSPSSHPALHTTTEDSAGVQTEF) shows a compositional bias: polar residues.

Belongs to the Niban family. Phosphorylated at Ser-641, Ser-646, Ser-692 and Ser-696 by the BRAF/MKK/ERK signaling cascade. In melanoma cells, the C-terminal phosphorylation may prevent targeting to the plasma membrane. In terms of processing, as apoptosis proceeds, degraded via an proteasome-independent pathway, probably by caspases.

The protein resides in the cytoplasm. It localises to the cytosol. It is found in the cell junction. The protein localises to the adherens junction. Its subcellular location is the membrane. Its function is as follows. May play a role in apoptosis suppression. May promote melanoma cell invasion in vitro. The polypeptide is Protein Niban 2 (Homo sapiens (Human)).